A 70-amino-acid polypeptide reads, in one-letter code: Large ribosomal subunit protein eL38 (70 aa).

The protein belongs to the eukaryotic ribosomal protein eL38 family.

This is Large ribosomal subunit protein eL38 (RpL38) from Spodoptera frugiperda (Fall armyworm).